The following is a 144-amino-acid chain: MRLALLCGLLLAGITATQGGLLNLNKMVTHMTGKKAFFSYWPYGCHCGLGGKGQPKDATDWCCQKHDCCYAHLKIDGCKSLTDNYKYSISQGTIQCSDNGSWCERQLCACDKEVALCLKQNLDSYNKRLRYYWRPRCKGKTPAC.

The first 19 residues, 1–19 (MRLALLCGLLLAGITATQG), serve as a signal peptide directing secretion. 7 disulfides stabilise this stretch: Cys-45/Cys-137, Cys-47/Cys-63, Cys-62/Cys-117, Cys-68/Cys-144, Cys-69/Cys-110, Cys-78/Cys-103, and Cys-96/Cys-108. Residues His-46, Gly-48, and Gly-50 each coordinate Ca(2+). His-66 is an active-site residue. Asp-67 is a Ca(2+) binding site. Residue Asn-99 is glycosylated (N-linked (GlcNAc...) asparagine). Asp-111 is a catalytic residue.

This sequence belongs to the phospholipase A2 family. It depends on Ca(2+) as a cofactor. As to expression, highly expressed in secondary lymphoid tissues, spleen and lymph nodes. Expressed at a lesser extent in thymus. Expressed in CD4-positive, IL2RA/CD25-positive, FOXP3-positive Tregs (at protein level). Expressed in myeloid cell subsets resident in spleen and lymph nodes, ITGAX/CD11C-positive dendritic cells and macrophages (at protein level). Enriched in CD4-positive, ITGAM/CD11B-positive dendritic cell subset. Expressed in pulmonary ITGAX/CD11C-positive dendritic cell subset (at protein level).

It localises to the secreted. It is found in the cell membrane. Its subcellular location is the cytoplasm. The enzyme catalyses a 1,2-diacyl-sn-glycero-3-phosphoethanolamine + H2O = a 1-acyl-sn-glycero-3-phosphoethanolamine + a fatty acid + H(+). It catalyses the reaction 1-hexadecanoyl-2-(9Z-octadecenoyl)-sn-glycero-3-phosphoethanolamine + H2O = 1-hexadecanoyl-sn-glycero-3-phosphoethanolamine + (9Z)-octadecenoate + H(+). The catalysed reaction is 1-hexadecanoyl-2-(9Z,12Z-octadecadienoyl)-sn-glycero-3-phosphoethanolamine + H2O = 1-hexadecanoyl-sn-glycero-3-phosphoethanolamine + (9Z,12Z)-octadecadienoate + H(+). It carries out the reaction 1,2-dihexadecanoyl-sn-glycero-3-phospho-(1'-sn-glycerol) + H2O = 1-hexadecanoyl-sn-glycero-3-phospho-(1'-sn-glycerol) + hexadecanoate + H(+). The enzyme catalyses 1-hexadecanoyl-2-(9Z-octadecenoyl)-sn-glycero-3-phospho-(1'-sn-glycerol) + H2O = 1-hexadecanoyl-sn-glycero-3-phospho-(1'-sn-glycerol) + (9Z)-octadecenoate + H(+). It catalyses the reaction a 1,2-diacyl-sn-glycero-3-phosphocholine + H2O = a 1-acyl-sn-glycero-3-phosphocholine + a fatty acid + H(+). The catalysed reaction is 1,2-dihexadecanoyl-sn-glycero-3-phosphocholine + H2O = 1-hexadecanoyl-sn-glycero-3-phosphocholine + hexadecanoate + H(+). It carries out the reaction 1-hexadecanoyl-2-(9Z-octadecenoyl)-sn-glycero-3-phosphocholine + H2O = 1-hexadecanoyl-sn-glycero-3-phosphocholine + (9Z)-octadecenoate + H(+). The enzyme catalyses 1-hexadecanoyl-2-(9Z,12Z-octadecadienoyl)-sn-glycero-3-phosphocholine + H2O = (9Z,12Z)-octadecadienoate + 1-hexadecanoyl-sn-glycero-3-phosphocholine + H(+). It catalyses the reaction 1-hexadecanoyl-2-(4Z,7Z,10Z,13Z,16Z,19Z-docosahexaenoyl)-sn-glycero-3-phosphocholine + H2O = (4Z,7Z,10Z,13Z,16Z,19Z)-docosahexaenoate + 1-hexadecanoyl-sn-glycero-3-phosphocholine + H(+). Its function is as follows. Secretory calcium-dependent phospholipase A2 that primarily targets extracellular lipids, exerting anti-inflammatory and immunosuppressive functions. Hydrolyzes the ester bond of the fatty acyl group attached at sn-2 position of phospholipids (phospholipase A2 activity) with preference for phosphatidylethanolamines and phosphatidylglycerols over phosphatidylcholines. In draining lymph nodes, selectively hydrolyzes diacyl and alkenyl forms of phosphatidylethanolamines, releasing omega-3 polyunsaturated fatty acids (PUFAs) such as eicosapentaenoate and docosahexaenoate that are precursors of the anti-inflammatory lipid mediators, resolvins. During the resolution phase of acute inflammation drives docosahexaenoate-derived resolvin D1 synthesis, which suppresses dendritic cell activation and T-helper 1 immune response. May act in an autocrine and paracrine manner. Via a mechanism independent of its catalytic activity, promotes differentiation of regulatory T cells (Tregs) and participates in the maintenance of immune tolerance. May contribute to lipid remodeling of cellular membranes and generation of lipid mediators involved in pathogen clearance. Displays bactericidal activity against Gram-positive bacteria by directly hydrolyzing phospholipids of the bacterial membrane. In Mus musculus (Mouse), this protein is Group IID secretory phospholipase A2 (Pla2g2d).